The chain runs to 272 residues: MEFWQNIYSHFNPVAFNLGSIAVHWYGIMYALALLSAIFVAKWFIKHDKLAISNDLFDSYIWWAEIGVILGARLGYVLFYDSHTMYYITHPWQIFNPYINGVYAGISGMSYHGAFFGFIIASYLFCRKNKVSFWFITDIAVLGVSAAYIFGRLGNFFNQELIGRVTDVPWGIYVGGVLRHPSQIYEAILEGLFVFLILAFYRKRKTFDGQLALMYGILYAIARIIAEFFRQPDSQLGFLVGEWLTMGILQSLIILIICVGFYVVRRKIIIKN.

Transmembrane regions (helical) follow at residues isoleucine 21 to alanine 41, tyrosine 60 to tyrosine 80, glycine 101 to alanine 121, and valine 131 to glycine 151. Arginine 152 provides a ligand contact to a 1,2-diacyl-sn-glycero-3-phospho-(1'-sn-glycerol). The next 3 helical transmembrane spans lie at proline 181 to tyrosine 201, glycine 209 to phenylalanine 229, and leucine 244 to valine 264.

The protein belongs to the Lgt family.

It is found in the cell inner membrane. It carries out the reaction L-cysteinyl-[prolipoprotein] + a 1,2-diacyl-sn-glycero-3-phospho-(1'-sn-glycerol) = an S-1,2-diacyl-sn-glyceryl-L-cysteinyl-[prolipoprotein] + sn-glycerol 1-phosphate + H(+). It functions in the pathway protein modification; lipoprotein biosynthesis (diacylglyceryl transfer). Catalyzes the transfer of the diacylglyceryl group from phosphatidylglycerol to the sulfhydryl group of the N-terminal cysteine of a prolipoprotein, the first step in the formation of mature lipoproteins. The sequence is that of Phosphatidylglycerol--prolipoprotein diacylglyceryl transferase from Aliarcobacter butzleri (strain RM4018) (Arcobacter butzleri).